Reading from the N-terminus, the 424-residue chain is UPF0597 protein Sbal_3070 (424 aa).

The protein belongs to the UPF0597 family.

In Shewanella baltica (strain OS155 / ATCC BAA-1091), this protein is UPF0597 protein Sbal_3070.